Consider the following 178-residue polypeptide: MVNAEDLFINLAKSLLGDDVIDVLRVLLEKGTEMTDEEIANQLNIKVNDVRKKLNLLEEQGFVSYRKTRDKDSGWFIYYWKPNIDQINEILLNRKRLILDKLKSRLEYEKNNTFFICPQDNSRYSFEEAFENEFKCLKCGSQLTYYDTEKIKSFLEQKIRQIEEEIDKETKLGANKSH.

The HTH TFE/IIEalpha-type domain maps to 4–88 (AEDLFINLAK…YWKPNIDQIN (85 aa)).

The protein belongs to the TFE family. In terms of assembly, monomer. Interaction with RNA polymerase subunits RpoF and RpoE is necessary for Tfe stimulatory transcription activity. Able to interact with Tbp and RNA polymerase in the absence of DNA promoter. Interacts both with the preinitiation and elongation complexes.

Transcription factor that plays a role in the activation of archaeal genes transcribed by RNA polymerase. Facilitates transcription initiation by enhancing TATA-box recognition by TATA-box-binding protein (Tbp), and transcription factor B (Tfb) and RNA polymerase recruitment. Not absolutely required for transcription in vitro, but particularly important in cases where Tbp or Tfb function is not optimal. It dynamically alters the nucleic acid-binding properties of RNA polymerases by stabilizing the initiation complex and destabilizing elongation complexes. Seems to translocate with the RNA polymerase following initiation and acts by binding to the non template strand of the transcription bubble in elongation complexes. This is Transcription factor E from Saccharolobus islandicus (strain L.S.2.15 / Lassen #1) (Sulfolobus islandicus).